The following is a 373-amino-acid chain: Probable G-protein coupled receptor 173 (373 aa).

Residues 1-26 (MANTTGEPEEVSGALSPPSASAYVKL) are Extracellular-facing. A glycan (N-linked (GlcNAc...) asparagine) is linked at N3. The helical transmembrane segment at 27 to 47 (VLLGLIMCVSLAGNAILSLLV) threads the bilayer. Over 48-59 (LKERALHKAPYY) the chain is Cytoplasmic. The helical transmembrane segment at 60–80 (FLLDLCLADGIRSAVCFPFVL) threads the bilayer. Over 81-97 (ASVRHGSSWTFSALSCK) the chain is Extracellular. Cysteines 96 and 174 form a disulfide. The helical transmembrane segment at 98 to 118 (IVAFMAVLFCFHAAFMLFCIS) threads the bilayer. The Cytoplasmic segment spans residues 119 to 139 (VTRYMAIAHHRFYAKRMTLWT). A helical transmembrane segment spans residues 140–160 (CAAVICMAWTLSVAMAFPPVF). Residues 161 to 188 (DVGTYKFIREEDQCIFEHRYFKANDTLG) lie on the Extracellular side of the membrane. A glycan (N-linked (GlcNAc...) asparagine) is linked at N184. A helical transmembrane segment spans residues 189–209 (FMLMLAVLMAATHAVYGKLLL). Residues 210 to 287 (FEYRHRKMKP…VKGEKQLGRM (78 aa)) are Cytoplasmic-facing. Residues 288–308 (FYAITLLFLLLWSPYIVACYW) form a helical membrane-spanning segment. The Extracellular segment spans residues 309–322 (RVFVKACAVPHRYL). The chain crosses the membrane as a helical span at residues 323–343 (ATAVWMSFAQAAVNPIVCFLL). At 344–373 (NKDLKKCLRTHAPCWGTGGAPAPREPYCVM) the chain is on the cytoplasmic side.

Belongs to the G-protein coupled receptor 1 family. In terms of tissue distribution, expressed in the ovary, specifically in granulosa cells of follicles that have passed the primary stage and in oocytes (at protein level). Expressed at high levels in brain. Lower levels in small intestine. In brain regions, detected in all regions tested. Highest levels in the cerebellum and cerebral cortex.

It is found in the cell membrane. Its function is as follows. Is a receptor for the SMIM20 derived peptides Phoenixin-14 and Phoenixin-20. It mediates the Phoenixin-14 and Phoenixin-20 augmentation of gonadotropin-releasing hormone (GNRH) signaling in the hypothalamus and pituitary gland. In the ovary, it mediates the effects of Phoenixin-14 and Phoenixin-20 induced granulosa cell proliferation during follicular growth. The chain is Probable G-protein coupled receptor 173 (GPR173) from Homo sapiens (Human).